The primary structure comprises 277 residues: MGNGVQPLDPVAIQMGSLSVKWYGVIIASAVVIALLLALSEANKRKMDKEIIVDLLIWAIPISIISARIYYVIFEWDFYKNNLGEIIKIWHGGIAIYGALIGAVLTAIIFSRVKKISFWQLADVVAPSLIIAQAIGRWGNFMNQEAHGAETTRAFLEGLHLPEFIINQMFIDGIYYQPTFLYESLWNVLGFILLLIIRRTKIRSGELFLSYVIWYSFGRFFIEGMRTDSLMWGDFRVSQVLSLLLIVLSIGLIIYRRLKMNPPYYMEDKFGKVAKKK.

The next 4 helical transmembrane spans lie at 22–42 (WYGV…LSEA), 51–71 (IIVD…RIYY), 89–109 (IWHG…TAII), and 116–136 (ISFW…QAIG). An a 1,2-diacyl-sn-glycero-3-phospho-(1'-sn-glycerol)-binding site is contributed by R137. Transmembrane regions (helical) follow at residues 177 to 197 (QPTF…LLII), 205 to 225 (GELF…IEGM), and 235 to 255 (FRVS…LIIY).

It belongs to the Lgt family.

The protein resides in the cell membrane. It carries out the reaction L-cysteinyl-[prolipoprotein] + a 1,2-diacyl-sn-glycero-3-phospho-(1'-sn-glycerol) = an S-1,2-diacyl-sn-glyceryl-L-cysteinyl-[prolipoprotein] + sn-glycerol 1-phosphate + H(+). It functions in the pathway protein modification; lipoprotein biosynthesis (diacylglyceryl transfer). Functionally, catalyzes the transfer of the diacylglyceryl group from phosphatidylglycerol to the sulfhydryl group of the N-terminal cysteine of a prolipoprotein, the first step in the formation of mature lipoproteins. The polypeptide is Phosphatidylglycerol--prolipoprotein diacylglyceryl transferase (Listeria welshimeri serovar 6b (strain ATCC 35897 / DSM 20650 / CCUG 15529 / CIP 8149 / NCTC 11857 / SLCC 5334 / V8)).